Here is a 219-residue protein sequence, read N- to C-terminus: Probable GTP-binding protein EngB (219 aa).

The 184-residue stretch at 24–207 (VQPEIAFAGR…HALIESWLRP (184 aa)) folds into the EngB-type G domain. Residues 32–39 (GRSNAGKS), 59–63 (GRTQH), 81–84 (DLPG), 148–151 (TKCD), and 185–188 (LFSA) each bind GTP. Serine 39 and threonine 61 together coordinate Mg(2+).

It belongs to the TRAFAC class TrmE-Era-EngA-EngB-Septin-like GTPase superfamily. EngB GTPase family. The cofactor is Mg(2+).

In terms of biological role, necessary for normal cell division and for the maintenance of normal septation. This Burkholderia thailandensis (strain ATCC 700388 / DSM 13276 / CCUG 48851 / CIP 106301 / E264) protein is Probable GTP-binding protein EngB.